The following is a 582-amino-acid chain: Leucine-rich repeat protein SHOC-2 (582 aa).

2 stretches are compositionally biased toward basic and acidic residues: residues 1 to 29 and 36 to 57; these read MSSSLGKEKDSKEKDPKVPSAKEREKEAK and KESKEKEPKTKGKDAKDGKKDS. The segment at 1–88 is disordered; it reads MSSSLGKEKD…PGTRKKSSNA (88 aa). The RVxF motif; important for interaction with PP1c signature appears at 63-66; sequence GVAF. LRR repeat units follow at residues 101–122, 124–145, 147–169, 170–191, 193–214, 216–237, 239–260, 262–283, 285–307, 308–329, 332–353, 356–377, 380–400, 403–424, 426–448, 449–470, 472–494, 495–516, 518–540, and 542–563; these read NSMRLDLSKRSIHILPSSIKEL, QLTELYLYSNKLQSLPAEVGCL, NLMTLALSENSLTSLPDSLDNLK, KLRMLDLRHNKLREIPSVVYRL, SLTTLYLRFNRITTVEKDIKNL, KLSMLSIRENKIKQLPAEIGEL, NLITLDVAHNQLEHLPKEIGNC, QITNLDLQHNELLDLPDTIGNL, SLSRLGLRYNRLSAIPRSLAKCS, ALEELNLENNNISTLPESLLSS, KLNSLTLARNCFQLYPVGGPSQ, TIYSLNMEHNRINKIPFGIFSR, VLSKLNMKDNQLTSLPLDFGT, SMVELNLATNQLTKIPEDVSGL, SLEVLILSNNLLKKLPHGLGNLR, KLRELDLEENKLESLPNEIAYL, DLQKLVLTNNQLTTLPRGIGHLT, NLTHLGLGENLLTHLPEEIGTL, NLEELYLNDNPNLHSLPFELALC, and KLSIMSIENCPLSHLPPQIVAG.

It belongs to the SHOC2 family. As to quaternary structure, component of the SHOC2-MRAS-PP1c (SMP) complex consisting of SHOC2, GTP-bound M-Ras/MRAS and the catalytic subunit of protein phosphatase 1 (either PPP1CA, PPP1CB or PPP1CC). SHOC2 and PP1c preferably bind M-Ras/MRAS, but they also bind K-Ras/KRAS, N-Ras/NRAS and H-Ras/HRAS; these interactions are GTP-dependent and both SHOC2 and PP1c are required to form a stable complex. Interacts with PP1c in the absence of Ras GTPases. Interacts with M-Ras/MRAS and RAF1. Interacts with ERBIN; disrupts the interaction with RAF1 and Ras, preventing the activation of the Ras signaling pathway. Interacts with LZTR1.

Its subcellular location is the cytoplasm. The protein resides in the nucleus. Functionally, core component of the SHOC2-MRAS-PP1c (SMP) holophosphatase complex that regulates activation of the MAPK pathway. Acts as a scaffolding protein in the SMP complex. The SMP complex specifically dephosphorylates the inhibitory phosphorylation at 'Ser-259' of RAF1 kinase, 'Ser-365' of BRAF kinase and 'Ser-214' of ARAF kinase, stimulating their kinase activities. The SMP complex enhances the dephosphorylation activity and substrate specificity of PP1c. The protein is Leucine-rich repeat protein SHOC-2 (SHOC2) of Homo sapiens (Human).